The sequence spans 209 residues: uncharacterized protein (209 aa).

Positions 41–76 (NVENLCLIRNKLKTDIENLLENKIDVENKLLVLRNQ) form a coiled coil.

This is an uncharacterized protein from Acanthamoeba polyphaga (Amoeba).